Here is a 342-residue protein sequence, read N- to C-terminus: Phosphoribosylformylglycinamidine cyclo-ligase (342 aa).

This sequence belongs to the AIR synthase family.

The protein localises to the cytoplasm. It carries out the reaction 2-formamido-N(1)-(5-O-phospho-beta-D-ribosyl)acetamidine + ATP = 5-amino-1-(5-phospho-beta-D-ribosyl)imidazole + ADP + phosphate + H(+). It functions in the pathway purine metabolism; IMP biosynthesis via de novo pathway; 5-amino-1-(5-phospho-D-ribosyl)imidazole from N(2)-formyl-N(1)-(5-phospho-D-ribosyl)glycinamide: step 2/2. In Staphylococcus aureus (strain MRSA252), this protein is Phosphoribosylformylglycinamidine cyclo-ligase.